A 178-amino-acid polypeptide reads, in one-letter code: MTQLSSNDVPSMGRRQFMNLLTFGTATGVALGALYPVANYFMPLRAGGGGGGTSAKDELGNPVTKTGWLATHQAGDRSLVQGLKGDPTYLIVNEGGEIGEFGLNAICTHLGCVVPWDSGANKFICPCHGSQYDTNGKVVRGPAPLSLALAHVDIEDDAVLVKQWSETDFRTNENPWWA.

Residues 20–42 (LLTFGTATGVALGALYPVANYFM) form a helical membrane-spanning segment. The Rieske domain occupies 65–161 (KTGWLATHQA…VDIEDDAVLV (97 aa)). Cys107, His109, Cys125, and His128 together coordinate [2Fe-2S] cluster. A disulfide bond links Cys112 and Cys127.

The protein belongs to the Rieske iron-sulfur protein family. In terms of assembly, the 4 large subunits of the cytochrome b6-f complex are cytochrome b6, subunit IV (17 kDa polypeptide, PetD), cytochrome f and the Rieske protein, while the 4 small subunits are PetG, PetL, PetM and PetN. The complex functions as a dimer. It depends on [2Fe-2S] cluster as a cofactor.

It localises to the cellular thylakoid membrane. The enzyme catalyses 2 oxidized [plastocyanin] + a plastoquinol + 2 H(+)(in) = 2 reduced [plastocyanin] + a plastoquinone + 4 H(+)(out). Functionally, component of the cytochrome b6-f complex, which mediates electron transfer between photosystem II (PSII) and photosystem I (PSI), cyclic electron flow around PSI, and state transitions. This Prochlorococcus marinus (strain MIT 9312) protein is Cytochrome b6-f complex iron-sulfur subunit.